Consider the following 372-residue polypeptide: Glutamate 5-kinase (372 aa).

Position 14 (Lys14) interacts with ATP. Residues Ser54, Asp141, and Asn153 each contribute to the substrate site. Residue 173–174 (TD) participates in ATP binding. The region spanning 280-358 (RGTLVLDDGA…DAIEALLGYV (79 aa)) is the PUA domain.

It belongs to the glutamate 5-kinase family.

It is found in the cytoplasm. The catalysed reaction is L-glutamate + ATP = L-glutamyl 5-phosphate + ADP. The protein operates within amino-acid biosynthesis; L-proline biosynthesis; L-glutamate 5-semialdehyde from L-glutamate: step 1/2. Functionally, catalyzes the transfer of a phosphate group to glutamate to form L-glutamate 5-phosphate. The protein is Glutamate 5-kinase of Pseudomonas paraeruginosa (strain DSM 24068 / PA7) (Pseudomonas aeruginosa (strain PA7)).